We begin with the raw amino-acid sequence, 292 residues long: Protease HtpX homolog (292 aa).

A run of 2 helical transmembrane segments spans residues 4–24 (IALF…VASL) and 38–58 (LGAL…ISLL). Histidine 144 contacts Zn(2+). Residue glutamate 145 is part of the active site. A Zn(2+)-binding site is contributed by histidine 148. Transmembrane regions (helical) follow at residues 152 to 172 (GDMV…VFLS) and 199 to 219 (ITTI…VAWF). Glutamate 224 is a binding site for Zn(2+).

Belongs to the peptidase M48B family. It depends on Zn(2+) as a cofactor.

The protein localises to the cell inner membrane. The protein is Protease HtpX homolog of Acidovorax ebreus (strain TPSY) (Diaphorobacter sp. (strain TPSY)).